The chain runs to 328 residues: MKQVVYTASPNSRQIHVWSLNVEGGLSLLQTVDVPGEVQPMVINPDGKHLYVGIRPQFSIVTYAIGKNGSLEQKSIAPLPGSPTHISTDRAGRFLFSASYSFNNLSVHPIDDQGNVKAPIQIVENLQAPHSANIDRENRQLLVPCLKEDHIRIFNMDNQGYLVESHADAITTETGAGPRHMAFHPKKQAIYCINELDSTVDVLRKWEKYRIVQSVDSLPADFSSVRWSADIHMTPDGRHLYTSERSESLISHFRVSEEGYHLTLAGHYLTETQPRGFAIDHSGHFLIASGQKSDHISVSRIDKFSGELTQLARYPVGKSPMWVTILAL.

The protein belongs to the cycloisomerase 2 family.

It carries out the reaction 6-phospho-D-glucono-1,5-lactone + H2O = 6-phospho-D-gluconate + H(+). Its pathway is carbohydrate degradation; pentose phosphate pathway; D-ribulose 5-phosphate from D-glucose 6-phosphate (oxidative stage): step 2/3. Catalyzes the hydrolysis of 6-phosphogluconolactone to 6-phosphogluconate. The protein is 6-phosphogluconolactonase of Xenorhabdus nematophila (strain ATCC 19061 / DSM 3370 / CCUG 14189 / LMG 1036 / NCIMB 9965 / AN6).